We begin with the raw amino-acid sequence, 148 residues long: Lysozyme C (148 aa).

Residues 1 to 18 form the signal peptide; the sequence is MKALIILGLVLLSVTVQG. Residues 19 to 148 enclose the C-type lysozyme domain; sequence KIFERCELAR…VSQYVKGCGV (130 aa). 4 disulfide bridges follow: cysteine 24-cysteine 146, cysteine 48-cysteine 134, cysteine 83-cysteine 99, and cysteine 95-cysteine 113. Active-site residues include glutamate 53 and aspartate 71.

It belongs to the glycosyl hydrolase 22 family. As to quaternary structure, monomer.

The protein resides in the secreted. The catalysed reaction is Hydrolysis of (1-&gt;4)-beta-linkages between N-acetylmuramic acid and N-acetyl-D-glucosamine residues in a peptidoglycan and between N-acetyl-D-glucosamine residues in chitodextrins.. Its function is as follows. Lysozymes have primarily a bacteriolytic function; those in tissues and body fluids are associated with the monocyte-macrophage system and enhance the activity of immunoagents. This Nasalis larvatus (Proboscis monkey) protein is Lysozyme C (LYZ).